A 73-amino-acid polypeptide reads, in one-letter code: Conotoxin Gla(3)-TxVI (73 aa).

The signal sequence occupies residues 1–19; the sequence is MQKLIILLLVAAVLMSAQA. The propeptide occupies 20 to 44; sequence VLQEKRPKEKIKFLSKRKTDAEKQQ. Cystine bridges form between Cys48-Cys62, Cys55-Cys66, and Cys61-Cys71. Pro49 bears the 4-hydroxyproline mark. Glu53 bears the 4-carboxyglutamate; partial mark. Position 54 is a 4-hydroxyproline (Pro54). 4-carboxyglutamate is present on Glu60. Trp64 is subject to 6'-bromotryptophan.

It belongs to the conotoxin O2 superfamily. Expressed by the venom duct.

It is found in the secreted. This chain is Conotoxin Gla(3)-TxVI, found in Conus textile (Cloth-of-gold cone).